The sequence spans 513 residues: Maturase K (513 aa).

It belongs to the intron maturase 2 family. MatK subfamily.

It is found in the plastid. Its subcellular location is the chloroplast. In terms of biological role, usually encoded in the trnK tRNA gene intron. Probably assists in splicing its own and other chloroplast group II introns. The protein is Maturase K of Danthonia spicata (Poverty oatgrass).